The following is a 353-amino-acid chain: MDLVVEPNLHSLINSSTHKWIFVGGKGGVGKTTSSCSIAIQMAQSQPHKQFLLISTDPAHNLSDAFGEKFGKDARRVTGMNNLSCMEIDPSAALKDMNDMAVSQANENGAQGDDGLGGLLQGGALAELTGSIPGIDEALSFMEVMKHIKNQEKGEGERYDTVIFDTAPTGHTLRFLQLPNTLSKLLEKFGEITGRLGPMLNSLAGAGNVDISTKLNQLKESVETIKDQFTNPDLTTFVCVCISEFLSLYETERLIQELISYDMDVNSIIVNQLLFADDDQEHNCKRCQARWKMQKKYLDQIDELYEDFHVVKMPLCAGEIRGLENLRKFSRFLNKEYNPAMDNKIIYELENKK.

An ATP-binding site is contributed by 26-33; that stretch reads KGGVGKTT. Asp-57 is an active-site residue. Positions 244 and 271 each coordinate ATP. Residues Cys-284 and Cys-287 each contribute to the Zn(2+) site.

This sequence belongs to the arsA ATPase family. Homodimer. Component of the Golgi to ER traffic (GET) complex, which is composed of GET1, GET2 and GET3. Within the complex, GET1 and GET2 form a heterotetramer which is stabilized by phosphatidylinositol binding and which binds to the GET3 homodimer. Interacts with the chloride channel protein GEF1.

It is found in the cytoplasm. It localises to the endoplasmic reticulum. Its subcellular location is the golgi apparatus. Its function is as follows. ATPase required for the post-translational delivery of tail-anchored (TA) proteins to the endoplasmic reticulum. Recognizes and selectively binds the transmembrane domain of TA proteins in the cytosol. This complex then targets to the endoplasmic reticulum by membrane-bound receptors GET1 and GET2, where the tail-anchored protein is released for insertion. This process is regulated by ATP binding and hydrolysis. ATP binding drives the homodimer towards the closed dimer state, facilitating recognition of newly synthesized TA membrane proteins. ATP hydrolysis is required for insertion. Subsequently, the homodimer reverts towards the open dimer state, lowering its affinity for the GET1-GET2 receptor, and returning it to the cytosol to initiate a new round of targeting. Cooperates with the HDEL receptor ERD2 to mediate the ATP-dependent retrieval of resident ER proteins that contain a C-terminal H-D-E-L retention signal from the Golgi to the ER. Involved in low-level resistance to the oxyanions arsenite and arsenate, and in heat tolerance. This is ATPase GET3 from Zygosaccharomyces rouxii (strain ATCC 2623 / CBS 732 / NBRC 1130 / NCYC 568 / NRRL Y-229).